The chain runs to 389 residues: Probable acyl-CoA dehydrogenase fadE25 (389 aa).

This sequence belongs to the acyl-CoA dehydrogenase family. FAD is required as a cofactor.

The enzyme catalyses a 2,3-saturated acyl-CoA + A = a 2,3-dehydroacyl-CoA + AH2. The sequence is that of Probable acyl-CoA dehydrogenase fadE25 (fadE25) from Mycobacterium bovis (strain ATCC BAA-935 / AF2122/97).